A 410-amino-acid polypeptide reads, in one-letter code: Cytochrome P450 105A3 (410 aa).

Residue C359 participates in heme binding.

It belongs to the cytochrome P450 family. In terms of assembly, monomer. Heme serves as cofactor.

Catalyzes the hydroxylation of sodium ML-236B carboxylate to pravastatin. The chain is Cytochrome P450 105A3 (cyp105A3) from Streptomyces carbophilus.